The chain runs to 307 residues: N-acetylmuramic acid 6-phosphate etherase (307 aa).

The region spanning 62 to 225 (IVAAFQKGGR…TTASMIRIGK (164 aa)) is the SIS domain. Residue Glu-90 is the Proton donor of the active site. The active site involves Glu-121.

Belongs to the GCKR-like family. MurNAc-6-P etherase subfamily. Homodimer.

The catalysed reaction is N-acetyl-D-muramate 6-phosphate + H2O = N-acetyl-D-glucosamine 6-phosphate + (R)-lactate. The protein operates within amino-sugar metabolism; 1,6-anhydro-N-acetylmuramate degradation. It functions in the pathway amino-sugar metabolism; N-acetylmuramate degradation. It participates in cell wall biogenesis; peptidoglycan recycling. Specifically catalyzes the cleavage of the D-lactyl ether substituent of MurNAc 6-phosphate, producing GlcNAc 6-phosphate and D-lactate. Together with AnmK, is also required for the utilization of anhydro-N-acetylmuramic acid (anhMurNAc) either imported from the medium or derived from its own cell wall murein, and thus plays a role in cell wall recycling. The protein is N-acetylmuramic acid 6-phosphate etherase of Rhizobium rhizogenes (strain K84 / ATCC BAA-868) (Agrobacterium radiobacter).